We begin with the raw amino-acid sequence, 284 residues long: MGVESVRCPLHFTKMQGAGNDFVVLDLRDGTPPPDAALVAWLADRHFGIGCDQVIAIEPPRGVGVVAAYRIWNADGSAAQQCGNGARCVAAWLVRDGSLADEHFLIDSPVQAHSVRCIGKDEYAVEMGLPVFEPERIPLSGFPNACAEYVLSLQGEVLRCGAVSMGNPHAVVEVDLIDVAPVERIGPLLQQHVAFPESVNVGFVQVIDPGLVRLRVYERGAGETLACGSGACAAAVVLMQRGRVGRDVRVVLPGGTLRVQWPVSGGPVTLSGPARCVFDGVWYG.

N20, Q53, and N73 together coordinate substrate. Residue C82 is the Proton donor of the active site. Substrate contacts are provided by residues 83–84 (GN), N167, N200, and 218–219 (ER). C227 acts as the Proton acceptor in catalysis. 228-229 (GS) is a substrate binding site.

Belongs to the diaminopimelate epimerase family. Homodimer.

The protein resides in the cytoplasm. It catalyses the reaction (2S,6S)-2,6-diaminopimelate = meso-2,6-diaminopimelate. Its pathway is amino-acid biosynthesis; L-lysine biosynthesis via DAP pathway; DL-2,6-diaminopimelate from LL-2,6-diaminopimelate: step 1/1. Catalyzes the stereoinversion of LL-2,6-diaminopimelate (L,L-DAP) to meso-diaminopimelate (meso-DAP), a precursor of L-lysine and an essential component of the bacterial peptidoglycan. The protein is Diaminopimelate epimerase of Xylella fastidiosa (strain M12).